Reading from the N-terminus, the 163-residue chain is Small ribosomal subunit protein uS3m (163 aa).

Residues Met-1–Leu-31 constitute a mitochondrion transit peptide.

This sequence belongs to the universal ribosomal protein uS3 family. In terms of assembly, component of the mitochondrial ribosome small subunit (28S) which comprises a 12S rRNA and about 30 distinct proteins.

It is found in the mitochondrion. This is Small ribosomal subunit protein uS3m (mrps24) from Danio rerio (Zebrafish).